We begin with the raw amino-acid sequence, 314 residues long: Olfactory receptor 51I1 (314 aa).

Residues 1–27 (MLGLNGTPFQPATLQLTGIPGIQTGLT) lie on the Extracellular side of the membrane. Residues 28–48 (WVALIFCILYMISIVGNLSIL) form a helical membrane-spanning segment. Residues 49–56 (TLVFWEPA) are Cytoplasmic-facing. Residues 57–77 (LHQPMYYFLSMLALNDLGVSF) traverse the membrane as a helical segment. Over 78–101 (STLPTVISTFCFNYNHVAFNACLV) the chain is Extracellular. A disulfide bridge connects residues Cys-99 and Cys-191. The helical transmembrane segment at 102-122 (QMFFIHTFSFMESGILLAMSL) threads the bilayer. Topologically, residues 123–141 (DRFVAICYPLRYVTVLTHN) are cytoplasmic. A helical membrane pass occupies residues 142–162 (RILAMGLGILTKSFTTLFPFP). Residues 163–198 (FVVKRLPFCKGNVLHHSYCLHPDLMKVACGDIHVNN) are Extracellular-facing. The helical transmembrane segment at 199 to 219 (IYGLLVIIFTYGMDSTFILLS) threads the bilayer. At 220-239 (YALILRAMLVIISQEQRLKA) the chain is on the cytoplasmic side. The helical transmembrane segment at 240 to 260 (LNTCMSHICAVLAFYVPIIAV) threads the bilayer. The Extracellular portion of the chain corresponds to 261 to 275 (SMIHRFWKSAPPVVH). A helical membrane pass occupies residues 276–296 (VMMSNVYLFVPPMLNPIIYSV). Topologically, residues 297-314 (KTKEIRKGILKFFHKSQA) are cytoplasmic.

It belongs to the G-protein coupled receptor 1 family.

The protein resides in the cell membrane. In terms of biological role, odorant receptor. The chain is Olfactory receptor 51I1 (OR51I1) from Homo sapiens (Human).